Consider the following 278-residue polypeptide: 4-deoxy-L-threo-5-hexosulose-uronate ketol-isomerase (278 aa).

The Zn(2+) site is built by H196, H198, E203, and H245.

Belongs to the KduI family. Requires Zn(2+) as cofactor.

The enzyme catalyses 5-dehydro-4-deoxy-D-glucuronate = 3-deoxy-D-glycero-2,5-hexodiulosonate. Its pathway is glycan metabolism; pectin degradation; 2-dehydro-3-deoxy-D-gluconate from pectin: step 4/5. Catalyzes the isomerization of 5-dehydro-4-deoxy-D-glucuronate to 3-deoxy-D-glycero-2,5-hexodiulosonate. This is 4-deoxy-L-threo-5-hexosulose-uronate ketol-isomerase from Shigella sonnei (strain Ss046).